Here is a 179-residue protein sequence, read N- to C-terminus: Large ribosomal subunit protein uL6 (179 aa).

Belongs to the universal ribosomal protein uL6 family. Part of the 50S ribosomal subunit.

In terms of biological role, this protein binds to the 23S rRNA, and is important in its secondary structure. It is located near the subunit interface in the base of the L7/L12 stalk, and near the tRNA binding site of the peptidyltransferase center. This Koribacter versatilis (strain Ellin345) protein is Large ribosomal subunit protein uL6.